The chain runs to 237 residues: Lipid A 1-diphosphate synthase (237 aa).

The Cytoplasmic segment spans residues 1 to 5 (MIKNL). The chain crosses the membrane as a helical span at residues 6–26 (PQIVLLNIVGLALFLSWYIPV). Topologically, residues 27–62 (NHGFWLPIDADIFYFFNQKLVESKAFLWLVALTNNR) are periplasmic. Residues 63–83 (AFDGCSLLAMGMLMLSFWLKE) form a helical membrane-spanning segment. At 84 to 90 (NAPGRRR) the chain is on the cytoplasmic side. The helical transmembrane segment at 91–111 (IVIIGLVMLLTAVVLNQLGQA) threads the bilayer. At 112-145 (LIPVKRASPTLTFTDINRVSELLSVPTKDASRDS) the chain is on the periplasmic side. Residue Lys-167 is a topological domain, cytoplasmic. Residues 168–188 (VAGLIALIIFVVFAFPRVMIG) form a helical membrane-spanning segment. The Periplasmic portion of the chain corresponds to 189–194 (AHWFTD). A helical transmembrane segment spans residues 195-215 (IIVGSMTVILIGLPWVLLTPL). Over 216-237 (SDRLITFFDKSLPGKNKHFQNK) the chain is Cytoplasmic.

The protein belongs to the LpxT phosphotransferase family.

It localises to the cell inner membrane. The enzyme catalyses di-trans,octa-cis-undecaprenyl diphosphate + alpha-Kdo-(2-&gt;4)-alpha-Kdo-(2-&gt;6)-lipid A (E. coli) = (Kdo)2-lipid A 1-diphosphate + di-trans,octa-cis-undecaprenyl phosphate. It functions in the pathway bacterial outer membrane biogenesis; lipopolysaccharide biosynthesis. Inhibited by BasR. This regulation does not occur at the level of transcription, but rather following the assembly of LpxT into the inner membrane. Functionally, involved in the modification of the lipid A domain of lipopolysaccharides (LPS). Transfers a phosphate group from undecaprenyl pyrophosphate (C55-PP) to lipid A to form lipid A 1-diphosphate. Contributes to the recycling of undecaprenyl phosphate (C55-P). In vitro, has low undecaprenyl-diphosphate phosphatase activity. This chain is Lipid A 1-diphosphate synthase, found in Escherichia coli (strain K12).